The chain runs to 147 residues: Large ribosomal subunit protein uL13 (147 aa).

A disordered region spans residues D128–Q147.

Belongs to the universal ribosomal protein uL13 family. Part of the 50S ribosomal subunit.

In terms of biological role, this protein is one of the early assembly proteins of the 50S ribosomal subunit, although it is not seen to bind rRNA by itself. It is important during the early stages of 50S assembly. This chain is Large ribosomal subunit protein uL13, found in Streptomyces coelicolor (strain ATCC BAA-471 / A3(2) / M145).